Reading from the N-terminus, the 110-residue chain is Ig kappa chain V region 2717 (110 aa).

A framework-1 region spans residues 1-23 (VEVLTQTPSPVSAAVGGTVTISC). The segment at 24–36 (QSTKSIYBBBYLA) is complementarity-determining-1. The segment at 37–51 (WYQZKPGQPPKALIY) is framework-2. A complementarity-determining-2 region spans residues 52–58 (TASSLAS). Residues 59 to 90 (GVPSRFTGSGSGTZFTLTLSDVZCDDAATYYC) form a framework-3 region. The interval 91 to 99 (GGADYTGYS) is complementarity-determining-3. Residues 100-109 (FGGGTEVVVK) form a framework-4 region.

The polypeptide is Ig kappa chain V region 2717 (Oryctolagus cuniculus (Rabbit)).